The primary structure comprises 723 residues: Tryptophan 2-monooxygenase (723 aa).

The FMN site is built by serine 218, glutamate 238, arginine 246, and arginine 266. Residue arginine 266 participates in substrate binding.

It belongs to the tryptophan 2-monooxygenase family. FMN is required as a cofactor.

It carries out the reaction L-tryptophan + O2 = indole-3-acetamide + CO2 + H2O. The protein operates within plant hormone metabolism; auxin biosynthesis. The sequence is that of Tryptophan 2-monooxygenase (iaaM) from Allorhizobium ampelinum (strain ATCC BAA-846 / DSM 112012 / S4) (Agrobacterium vitis (strain S4)).